The following is a 288-amino-acid chain: Programmed cell death protein 1 (288 aa).

A signal peptide spans 1–24 (MQIPQAPWPVVWAVLQLGWRPGWF). Positions 25–34 (LDSPDRPWNP) are nivolumab binding. Residues 25-170 (LDSPDRPWNP…RPAGQFQTLV (146 aa)) are Extracellular-facing. The Ig-like V-type domain maps to 35 to 145 (PTFSPALLVV…ESLRAELRVT (111 aa)). N49, N58, N74, and N116 each carry an N-linked (GlcNAc...) asparagine glycan. C54 and C123 are joined by a disulfide. An interaction with CD274/PDCD1L1 region spans residues 70 to 77 (MSPSNQTD). The interval 74-99 (NQTDKLAAFPEDRSQPGQDCRFRVTQ) is pembrolizumab binding. Residues 171–191 (VGVVGGLLGSLVLLVWVLAVI) form a helical membrane-spanning segment. The Cytoplasmic portion of the chain corresponds to 192 to 288 (CSRAARGTIG…PEDGHCSWPL (97 aa)). Residues 221–226 (VDYGEL) carry the ITIM motif motif. At Y223 the chain carries Phosphotyrosine. K233 participates in a covalent cross-link: Glycyl lysine isopeptide (Lys-Gly) (interchain with G-Cter in ubiquitin). T234 carries the post-translational modification Phosphothreonine; by MAPK3. An ITSM motif motif is present at residues 247–251 (EYATI). Y248 is subject to Phosphotyrosine. A disordered region spans residues 254 to 288 (PSGMGTSSPARRGSADGPRSAQPLRPEDGHCSWPL). Over residues 278–288 (RPEDGHCSWPL) the composition is skewed to basic and acidic residues.

Monomer. Interacts with CD274/PDCD1L1. Interacts with CD273/PDCD1LG2. Interacts with FBXO38; leading to ubiquitination and degradation of PDCD1 by the proteasome. Post-translationally, ubiquitinated at Lys-233 by the SCF(FBXO38) complex, leading to its proteasomal degradation. Ubiquitinated via 'Lys-48'-linked polyubiquitin chains. Deubiquitinated and thus stabilized by USP5. In terms of processing, tyrosine phosphorylated at Tyr-223 (within ITIM motif) and Tyr-248 (ITSM motif) upon ligand binding. Phosphorylation at Tyr-248 promotes the recruitment of the protein tyrosine phosphatase PTPN11/SHP-2 that mediates dephosphorylation of key TCR proximal signaling molecules, such as ZAP70, PRKCQ/PKCtheta and CD247/CD3zeta. Phosphorylation at Thr-234 promotes the recruitment of the deubiquitinase USP5. N-glycosylation at Asn-58 contains at least two N-acetylglucosamine units and one fucose. N-glycosylation does not affect binding to nivolumab drug.

It localises to the cell membrane. With respect to regulation, inhibited by pembrolizumab (also named MK-3475 or lambrolizumab), a monoclonal antibody that prevents the interaction with CD274/PDCD1L1. Inhibited by nivolumab (also named ONO-4538, BMS-936558 or Opdivo), a monoclonal antibody that prevents the interaction with CD274/PDCD1L1. The interaction with nivolumab is not dependent on glycosylation and depends on a loop at the N-terminus (N-terminal loop, corresponding to residues 25-34). Targeting the interaction between PDCD1 and CD274/PDCD1L1 with pembrolizumab and nivolumab antibodies has demonstrated great promise as a strategy for controlling and eradicating cancer. Pembrolizumab and nivolumab are used for treatment of patients with advanced melanoma. These antibodies are also effective against other cancers, such as non-small cell lung cancer, renal cell carcinoma, bladder cancer and Hodgkin's lymphoma. In terms of biological role, inhibitory receptor on antigen activated T-cells that plays a critical role in induction and maintenance of immune tolerance to self. Delivers inhibitory signals upon binding to ligands CD274/PDCD1L1 and CD273/PDCD1LG2. Following T-cell receptor (TCR) engagement, PDCD1 associates with CD3-TCR in the immunological synapse and directly inhibits T-cell activation. Suppresses T-cell activation through the recruitment of PTPN11/SHP-2: following ligand-binding, PDCD1 is phosphorylated within the ITSM motif, leading to the recruitment of the protein tyrosine phosphatase PTPN11/SHP-2 that mediates dephosphorylation of key TCR proximal signaling molecules, such as ZAP70, PRKCQ/PKCtheta and CD247/CD3zeta. Its function is as follows. The PDCD1-mediated inhibitory pathway is exploited by tumors to attenuate anti-tumor immunity and escape destruction by the immune system, thereby facilitating tumor survival. The interaction with CD274/PDCD1L1 inhibits cytotoxic T lymphocytes (CTLs) effector function. The blockage of the PDCD1-mediated pathway results in the reversal of the exhausted T-cell phenotype and the normalization of the anti-tumor response, providing a rationale for cancer immunotherapy. This is Programmed cell death protein 1 from Homo sapiens (Human).